The following is a 382-amino-acid chain: B3 domain-containing protein Os03g0622100 (382 aa).

The TF-B3 1 DNA-binding region spans 29–123; the sequence is CKHFLTYMVG…SFDVLIFDPS (95 aa). Basic and acidic residues-rich tracts occupy residues 136-158 and 193-202; these read RGFG…DKNG and QDHREEKKEG. Residues 136 to 222 are disordered; the sequence is RGFGREEKSA…EDVDKDGEDR (87 aa). Residues 203–218 show a composition bias toward acidic residues; sequence DDEDEDEDEDEDVDKD. The TF-B3 2 DNA-binding region spans 261–363; sequence KVIHASHLLS…AGDRLRRRPR (103 aa).

It is found in the nucleus. The sequence is that of B3 domain-containing protein Os03g0622100 from Oryza sativa subsp. japonica (Rice).